The following is a 549-amino-acid chain: Sphingosine-1-phosphate transporter SPNS2 (549 aa).

2 disordered regions span residues 14–36 and 78–97; these read AEEE…GAGG and PGCA…PASL. A run of 11 helical transmembrane segments spans residues 141 to 161, 169 to 189, 202 to 222, 229 to 249, 261 to 281, 320 to 340, 364 to 384, 398 to 418, 422 to 442, 466 to 486, and 507 to 527; these read GLLQ…FGYL, VILS…SFIP, LVGI…GDLF, LMLS…YITG, WALR…LILV, LATS…PLYL, LIFG…GAGA, LVCA…FVAA, IVGA…NWAI, TSHL…SDLI, and LCPF…LFFL.

The protein belongs to the major facilitator superfamily. Spinster (TC 2.A.1.49) family. Expression is high in the lungs and liver, low in the lymph nodes, spleen and bone marrow, and very low but detectable in the thymus. Not expressed in red blood cells. Also expressed in the inner ear: expressed in the cochlea, both in the lateral wall and organ of Corti.

It localises to the cell membrane. The protein resides in the endosome membrane. The enzyme catalyses sphing-4-enine 1-phosphate(in) = sphing-4-enine 1-phosphate(out). The catalysed reaction is sphinganine 1-phosphate(in) = sphinganine 1-phosphate(out). Its function is as follows. Lipid transporter that specifically mediates export of sphingosine-1-phosphate (sphing-4-enine 1-phosphate, S1P) and sphinganine-1-phosphate in the lymph, thereby playing a role in lymphocyte trafficking. S1P is a bioactive signaling molecule that regulates many physiological processes important for the development and for the immune system. Regulates levels of S1P and the S1P gradient that exists between the high circulating concentrations of S1P and low tissue levels that control lymphocyte trafficking. Required for the egress of T-cells from lymph nodes during an immune response by mediating S1P secretion, which generates a gradient that enables activated T-cells to access lymph. Also required for the egress of immature B-cells from the bone marrow. In contrast, it does not mediate S1P release from red blood cells. Involved in auditory function: S1P release in the inner ear is required for maintenance of the endocochlear potential in the cochlea. In addition to export, also able to mediate S1P import. In Mus musculus (Mouse), this protein is Sphingosine-1-phosphate transporter SPNS2.